A 420-amino-acid polypeptide reads, in one-letter code: CinA-like protein (420 aa).

This sequence belongs to the CinA family.

The sequence is that of CinA-like protein from Chloroherpeton thalassium (strain ATCC 35110 / GB-78).